The chain runs to 204 residues: Allatotropin (204 aa).

The first 20 residues, 1-20, serve as a signal peptide directing secretion; the sequence is MNLTMQLAVIVAVCLCLAEG. The propeptide occupies 21 to 35; it reads APDVRLTRTKQQRPT. Residues 47 to 83 form a disordered region; that stretch reads RGFGKRDRPHPRAERDVDHQAPSARPNRGTPTFKSPT. A Phenylalanine amide modification is found at Phe-49. Positions 50–65 are enriched in basic and acidic residues; it reads GKRDRPHPRAERDVDH. The propeptide occupies 53-204; sequence DRPHPRAERD…LSSEELLRNF (152 aa).

As to expression, expressed extensively in the brain, frontal ganglion and terminal ganglion of the day 2 fifth instar larva (at protein level). Not expressed in the larval brain after day 4 of the fifth instar, or in the brain of the pupa or adult. Expression in the terminal ganglion is localized to cells in the posterior portion of the seventh neuromere of day 2 fifth instar larvae. In the pupa and adult expression is detected in the medial region of neuromere 6, the dorsal medial region of neuromere 7, and the posterior neuromere of the terminal ganglion (at protein level). In the frontal ganglion expression decreases in the wandering larvae and is present at low levels in during pupal ecdysis, but is not detected in the adult. Expressed in the subesophageal ganglion of day 2 fifth instar larva, but not at any time before or after day 2. Not expressed in the abdominal ganglia 1-6 of the day 2 fifth instar larva (at protein level). Expressed in the anterior neuromeres of the pterothoracic ganglion in pupa but not in adult (at protein level). Expressed in the unfused abdominal ganglia of day 10 pupae, and in pharate adult is expressed in median neurosecretory cells M1, M2 and M5, but not in median neurosecretory cells M3 and M4 (at protein level). Not expressed in the differentiated median neurosecretory cells M5 of the larva (at protein level). In the pharate adult brain isoform 3 is the predominant form, with lower levels of isoform 2 and very low levels of isoform 1 detected. In the pharate adult nerve cord isoform 3 is the predominant form, with lower levels of isoform 2 and no isoform 1 detected. In the pharate adult frontal ganglion isoform 3 is expressed, but not isoform 1 and isoform 2.

It is found in the secreted. In terms of biological role, neuropeptide stimulator of juvenile hormone synthesis. Cardioregulatory neurohormone that increases heart beat rate in the adult but not in the larva. Inhibits active ion transport in the midgut of feeding fourth instar and day 2 fifth instar larva, but not in the midgut of pharate or wandering fifth instar larva. The chain is Allatotropin from Manduca sexta (Tobacco hawkmoth).